Consider the following 378-residue polypeptide: Mannitol-1-phosphate 5-dehydrogenase (378 aa).

4-15 (SVHFGAGNIGRG) provides a ligand contact to NAD(+).

The protein belongs to the mannitol dehydrogenase family.

It catalyses the reaction D-mannitol 1-phosphate + NAD(+) = beta-D-fructose 6-phosphate + NADH + H(+). The sequence is that of Mannitol-1-phosphate 5-dehydrogenase from Streptococcus pneumoniae (strain CGSP14).